A 69-amino-acid polypeptide reads, in one-letter code: Putative membrane protein insertion efficiency factor (69 aa).

This sequence belongs to the UPF0161 family.

It is found in the cell inner membrane. Its function is as follows. Could be involved in insertion of integral membrane proteins into the membrane. The protein is Putative membrane protein insertion efficiency factor of Laribacter hongkongensis (strain HLHK9).